Here is a 114-residue protein sequence, read N- to C-terminus: Large ribosomal subunit protein uL22 (114 aa).

It belongs to the universal ribosomal protein uL22 family. As to quaternary structure, part of the 50S ribosomal subunit.

In terms of biological role, this protein binds specifically to 23S rRNA; its binding is stimulated by other ribosomal proteins, e.g. L4, L17, and L20. It is important during the early stages of 50S assembly. It makes multiple contacts with different domains of the 23S rRNA in the assembled 50S subunit and ribosome. Its function is as follows. The globular domain of the protein is located near the polypeptide exit tunnel on the outside of the subunit, while an extended beta-hairpin is found that lines the wall of the exit tunnel in the center of the 70S ribosome. The sequence is that of Large ribosomal subunit protein uL22 from Methylacidiphilum infernorum (isolate V4) (Methylokorus infernorum (strain V4)).